The chain runs to 304 residues: Ornithine carbamoyltransferase (304 aa).

Carbamoyl phosphate-binding positions include 53–56, Gln80, Arg104, and 131–134; these read STRT and HPCQ. L-ornithine-binding positions include Asn162, Asp219, and 223 to 224; that span reads SM. Carbamoyl phosphate-binding positions include 259–260 and Arg287; that span reads CL.

The protein belongs to the aspartate/ornithine carbamoyltransferase superfamily. OTCase family.

Its subcellular location is the cytoplasm. The catalysed reaction is carbamoyl phosphate + L-ornithine = L-citrulline + phosphate + H(+). It functions in the pathway amino-acid biosynthesis; L-arginine biosynthesis; L-arginine from L-ornithine and carbamoyl phosphate: step 1/3. Reversibly catalyzes the transfer of the carbamoyl group from carbamoyl phosphate (CP) to the N(epsilon) atom of ornithine (ORN) to produce L-citrulline. In Herminiimonas arsenicoxydans, this protein is Ornithine carbamoyltransferase.